Reading from the N-terminus, the 413-residue chain is CinA-like protein (413 aa).

This sequence belongs to the CinA family.

The polypeptide is CinA-like protein (Geobacter sulfurreducens (strain ATCC 51573 / DSM 12127 / PCA)).